A 305-amino-acid polypeptide reads, in one-letter code: UDP-3-O-acyl-N-acetylglucosamine deacetylase (305 aa).

Zn(2+) contacts are provided by His-79, His-238, and Asp-242. Residue His-265 is the Proton donor of the active site.

The protein belongs to the LpxC family. Zn(2+) is required as a cofactor.

It catalyses the reaction a UDP-3-O-[(3R)-3-hydroxyacyl]-N-acetyl-alpha-D-glucosamine + H2O = a UDP-3-O-[(3R)-3-hydroxyacyl]-alpha-D-glucosamine + acetate. Its pathway is glycolipid biosynthesis; lipid IV(A) biosynthesis; lipid IV(A) from (3R)-3-hydroxytetradecanoyl-[acyl-carrier-protein] and UDP-N-acetyl-alpha-D-glucosamine: step 2/6. In terms of biological role, catalyzes the hydrolysis of UDP-3-O-myristoyl-N-acetylglucosamine to form UDP-3-O-myristoylglucosamine and acetate, the committed step in lipid A biosynthesis. This is UDP-3-O-acyl-N-acetylglucosamine deacetylase from Mannheimia succiniciproducens (strain KCTC 0769BP / MBEL55E).